Reading from the N-terminus, the 381-residue chain is DNA replication and repair protein RecF (381 aa).

30 to 37 (GENAQGKT) contacts ATP.

Belongs to the RecF family.

It is found in the cytoplasm. The RecF protein is involved in DNA metabolism; it is required for DNA replication and normal SOS inducibility. RecF binds preferentially to single-stranded, linear DNA. It also seems to bind ATP. The polypeptide is DNA replication and repair protein RecF (Lactobacillus delbrueckii subsp. bulgaricus (strain ATCC 11842 / DSM 20081 / BCRC 10696 / JCM 1002 / NBRC 13953 / NCIMB 11778 / NCTC 12712 / WDCM 00102 / Lb 14)).